Reading from the N-terminus, the 315-residue chain is Homoserine kinase (315 aa).

An ATP-binding site is contributed by 97 to 107 (PPARGLGSSAT).

Belongs to the GHMP kinase family. Homoserine kinase subfamily.

It is found in the cytoplasm. It catalyses the reaction L-homoserine + ATP = O-phospho-L-homoserine + ADP + H(+). It participates in amino-acid biosynthesis; L-threonine biosynthesis; L-threonine from L-aspartate: step 4/5. In terms of biological role, catalyzes the ATP-dependent phosphorylation of L-homoserine to L-homoserine phosphate. This Prochlorococcus marinus (strain SARG / CCMP1375 / SS120) protein is Homoserine kinase.